The chain runs to 524 residues: Nucleobase-ascorbate transporter 2 (524 aa).

Transmembrane regions (helical) follow at residues 41 to 61 (YILA…MMGG), 69 to 89 (VVQT…LFGT), 91 to 111 (LPTV…IIHD), 133 to 153 (GAII…MWAI), 155 to 175 (SRFF…FGLF), 179 to 199 (FPVV…FVIF), 217 to 237 (FALI…TASG), 282 to 302 (AFAM…AFKA), 359 to 379 (RVIQ…KFGA), 380 to 400 (LFAS…FGLV), 419 to 439 (LFIV…FRDF), and 457 to 477 (DFLN…AVFL).

This sequence belongs to the nucleobase:cation symporter-2 (NCS2) (TC 2.A.40) family. In terms of tissue distribution, expressed in cotyledons 10 days after imbibition (DAI). Expressed in the minor and major veins of cotyledons and leaves, in the shoot apex and pedicels. Expressed in the root meristems, root tips and lateral root primordia.

Its subcellular location is the membrane. This is Nucleobase-ascorbate transporter 2 (NAT2) from Arabidopsis thaliana (Mouse-ear cress).